Reading from the N-terminus, the 692-residue chain is MARKTPLNRIRNIGIAAHIDAGKTTTSERILFYTGVSHKIGEVHDGAATMDWMEQEKERGITITSAATTCFWKDHQINLIDTPGHVDFTIEVERSMRVLDGAVSVFCSVGGVQPQSETVWRQANKYGVPRIVFVNKMDRIGANFYNVENQIKLRLKANPVPINIPIGTEDTFIGVIDLVQMKAIVWNNETMGAKYDVEEIPSDLLEKAKQYREKLVEAVAEQDEALMEKYLGGEELSVEEIKKGIKTGCLNMSLVPMLCGSSFKNKGVQTLLDAVIDYLPAPTEVVDIKGIDPKTEEEVFVKSSDDGEFAGLAFKIMTDPFVGQLTFVRVYRGKLESGSYVYNSTKDKKERVGRLLKMHSNKREDIKEVYAGEICAFVGLKDTLTGDTLCDEKNAIVLERMEFPEPVIHIAVEPKTKADQEKMGVALGKLAEEDPSFRVMTQEETGQTLIGGMGELHLEIIVDRLKREFKVEAEIGQPQVAFRETIRSSVSKEHKYAKQSGGRGQYGHVFIKLEPKEPGSGYEFVNEISGGVIPKEYIPAVDKGIQEAMQNGVLAGYPVVDFKVTLYDGSYHDVDSSEMAFKIAGSMAFKEASRAANPVLLEPMMKVEVEVPEEYMGDVIGDLNRRRGQINSMDDRLGLKIVNAFVPLVEMFGYSTDLRSATQGRGTYSMEFDHYGEVPSNIAKEIVEKRKG.

Residues 8–283 (NRIRNIGIAA…AVIDYLPAPT (276 aa)) enclose the tr-type G domain. GTP is bound by residues 17 to 24 (AHIDAGKT), 81 to 85 (DTPGH), and 135 to 138 (NKMD).

This sequence belongs to the TRAFAC class translation factor GTPase superfamily. Classic translation factor GTPase family. EF-G/EF-2 subfamily.

The protein resides in the cytoplasm. In terms of biological role, catalyzes the GTP-dependent ribosomal translocation step during translation elongation. During this step, the ribosome changes from the pre-translocational (PRE) to the post-translocational (POST) state as the newly formed A-site-bound peptidyl-tRNA and P-site-bound deacylated tRNA move to the P and E sites, respectively. Catalyzes the coordinated movement of the two tRNA molecules, the mRNA and conformational changes in the ribosome. The polypeptide is Elongation factor G (Helicobacter pylori (strain G27)).